A 375-amino-acid chain; its full sequence is Ornithine carbamoyltransferase, chloroplastic (375 aa).

Residues 123-126 (SMRT), Arg174, His201, and Gln204 each bind carbamoyl phosphate. L-ornithine contacts are provided by Asn232, Asp293, Ser297, and Met298. The active-site Proton acceptor is Cys333. Carbamoyl phosphate contacts are provided by residues 333-334 (CL) and Arg361.

This sequence belongs to the aspartate/ornithine carbamoyltransferase superfamily. OTCase family. As to quaternary structure, homotrimer.

The protein localises to the plastid. Its subcellular location is the chloroplast. The catalysed reaction is carbamoyl phosphate + L-ornithine = L-citrulline + phosphate + H(+). This Pisum sativum (Garden pea) protein is Ornithine carbamoyltransferase, chloroplastic (ARGF).